Reading from the N-terminus, the 534-residue chain is Kelch repeat and BTB domain-containing protein 4 (534 aa).

A disordered region spans residues Met1 to Ala25. One can recognise a BTB domain in the interval Ala61 to Ala128. The region spanning Cys163 to His255 is the BACK domain. Kelch repeat units lie at residues His255–Gly301, Asp302–Gly344, Ala347–Gly394, Ile396–Asp446, and Val448–Asp497.

In terms of assembly, component of the BCR(KBTBD4) E3 ubiquitin ligase complex, at least composed of CUL3, KBTBD4 and RBX1.

Substrate-specific adapter of a BCR (BTB-CUL3-RBX1) E3 ubiquitin ligase complex which targets CoREST corepressor complex components RCOR1, KDM1A/LSD1 and HDAC2 for proteasomal degradation. RCOR1 is likely to be the primary target while degradation of KDM1A and HDAC2 is likely due to their association with RCOR1. Also targets RCOR3, MIER2 and MIER3 for proteasomal degradation as well as associated proteins ZNF217 and RREB1. Degradation is dependent on the presence of an ELM2 domain in the target proteins. This chain is Kelch repeat and BTB domain-containing protein 4 (KBTBD4), found in Homo sapiens (Human).